A 330-amino-acid polypeptide reads, in one-letter code: Olfactory receptor 1P1 (330 aa).

Residues 1 to 39 (MGLTQDFFPPTSELLEGGNQTSTFEFLLWGLSDQPQQQH) are Extracellular-facing. An N-linked (GlcNAc...) asparagine glycan is attached at Asn19. Residues 40 to 60 (IFFLLFLWMYVVTVAGNLLIV) form a helical membrane-spanning segment. Residues 61–71 (LAIGTDTHLHT) lie on the Cytoplasmic side of the membrane. The chain crosses the membrane as a helical span at residues 72-92 (PMYFFLASLSCADIFSTSTTV). Residues 93–111 (PKALVNIQTQSRSISYAGC) lie on the Extracellular side of the membrane. A disulfide bridge links Cys111 with Cys192. Residues 112-132 (LAQLYFFLTFGDMDIFLPATM) traverse the membrane as a helical segment. Topologically, residues 133–137 (AYDRY) are cytoplasmic. A helical membrane pass occupies residues 138–158 (VAICHLLHYMMIMSLHRCAFL). Residues 159–209 (VTACWTLTSLLAMTRTFLIFRLSLCSKILPGFFCDLGPLMKVSCSDAQVNE) are Extracellular-facing. Residues 210–230 (LVLLFLGGAVILIPFMLILVS) form a helical membrane-spanning segment. At 231–257 (YIRIVSAILRAPSAQGRRKAFSTCDSH) the chain is on the cytoplasmic side. A helical transmembrane segment spans residues 258–278 (LVVVALFFGTVIRAYLCPSSS). Over 279–286 (SSNSVKED) the chain is Extracellular. The chain crosses the membrane as a helical span at residues 287-307 (TAAAVMYTVVTPLLNPFIYSM). The Cytoplasmic segment spans residues 308-330 (RNKDMKAAVVRLLKGRVSFSQGQ).

This sequence belongs to the G-protein coupled receptor 1 family.

It localises to the cell membrane. Functionally, odorant receptor. The chain is Olfactory receptor 1P1 (OR1P1) from Homo sapiens (Human).